Consider the following 416-residue polypeptide: Glutamyl-tRNA reductase (416 aa).

Residues 51–54 (TCNR), serine 110, 115–117 (EPQ), and glutamine 121 each bind substrate. The Nucleophile role is filled by cysteine 52. An NADP(+)-binding site is contributed by 190 to 195 (GAGQTG).

Belongs to the glutamyl-tRNA reductase family. As to quaternary structure, homodimer.

It carries out the reaction (S)-4-amino-5-oxopentanoate + tRNA(Glu) + NADP(+) = L-glutamyl-tRNA(Glu) + NADPH + H(+). It participates in porphyrin-containing compound metabolism; protoporphyrin-IX biosynthesis; 5-aminolevulinate from L-glutamyl-tRNA(Glu): step 1/2. In terms of biological role, catalyzes the NADPH-dependent reduction of glutamyl-tRNA(Glu) to glutamate 1-semialdehyde (GSA). The sequence is that of Glutamyl-tRNA reductase from Francisella tularensis subsp. holarctica (strain OSU18).